Consider the following 135-residue polypeptide: LELDEKTLTITLNDAGESVTLTSEQATEGQKLFVANCTKCHLQGKTKTNNNVSLGLGDLAKAEPPRDNLLALIDYLEHPTSYDGEDDLSELHPNVSRPDIYPELRNLTEDDVYNVAAYMLVAPRLDERWGGTIYF.

Heme c-binding residues include Cys-37, Cys-40, His-41, and His-92.

This sequence belongs to the cytochrome c family. PsbV subfamily. PSII is composed of 1 copy each of membrane proteins PsbA, PsbB, PsbC, PsbD, PsbE, PsbF, PsbH, PsbI, PsbJ, PsbK, PsbL, PsbM, PsbT, PsbX, PsbY, PsbZ, Psb30/Ycf12, peripheral proteins PsbO, CyanoQ (PsbQ), PsbU, PsbV and a large number of cofactors. It forms dimeric complexes. Heme c is required as a cofactor.

Its subcellular location is the cellular thylakoid membrane. Functionally, one of the extrinsic, lumenal subunits of photosystem II (PSII). PSII is a light-driven water plastoquinone oxidoreductase, using light energy to abstract electrons from H(2)O, generating a proton gradient subsequently used for ATP formation. The extrinsic proteins stabilize the structure of photosystem II oxygen-evolving complex (OEC), the ion environment of oxygen evolution and protect the OEC against heat-induced inactivation. Low-potential cytochrome c that plays a role in the OEC of PSII. The polypeptide is Photosystem II extrinsic protein V (Microcystis aeruginosa).